A 361-amino-acid polypeptide reads, in one-letter code: Putative agmatine deiminase (361 aa).

The Amidino-cysteine intermediate role is filled by Cys-354.

It belongs to the agmatine deiminase family.

The enzyme catalyses agmatine + H2O = N-carbamoylputrescine + NH4(+). This Streptococcus pneumoniae (strain Taiwan19F-14) protein is Putative agmatine deiminase.